A 135-amino-acid chain; its full sequence is Cytochrome b5 (135 aa).

A Cytochrome b5 heme-binding domain is found at 4–80; that stretch reads SKVYSLAEVS…MDEMCVGDID (77 aa). Heme is bound by residues histidine 39 and histidine 63. Residues 106-126 form a helical membrane-spanning segment; it reads FIIKLLQFLVPLIILGVAVGI.

Belongs to the cytochrome b5 family.

It localises to the endoplasmic reticulum membrane. Its subcellular location is the microsome membrane. Functionally, membrane bound hemoprotein which function as an electron carrier for several membrane bound oxygenases. The polypeptide is Cytochrome b5 (Cuscuta reflexa (Southern Asian dodder)).